A 60-amino-acid chain; its full sequence is Large ribosomal subunit protein bL32 (60 aa).

Positions 1–60 are disordered; that stretch reads MAVQQNKKSPSKRGMHRSHNALTVPGIAVEPTTGETHMRHHISPNGFYRGRQVLKNKSEA. Positions 9 to 19 are enriched in basic residues; it reads SPSKRGMHRSH.

This sequence belongs to the bacterial ribosomal protein bL32 family.

This is Large ribosomal subunit protein bL32 from Acidovorax ebreus (strain TPSY) (Diaphorobacter sp. (strain TPSY)).